Consider the following 360-residue polypeptide: uncharacterized protein (360 aa).

Residues 1–33 (MSGRRKGCSAATASSSSSSPPSRLPPLPGHARR) form a disordered region.

The protein belongs to the herpesviridae US22 family.

This is an uncharacterized protein from Human cytomegalovirus (strain AD169) (HHV-5).